Reading from the N-terminus, the 406-residue chain is Formate-dependent phosphoribosylglycinamide formyltransferase (406 aa).

N(1)-(5-phospho-beta-D-ribosyl)glycinamide contacts are provided by residues E28–L29 and E88. ATP-binding positions include R121, K162, S167–Q172, E202–I205, and E210. The ATP-grasp domain occupies R126 to L320. Mg(2+) is bound by residues E279 and E291. N(1)-(5-phospho-beta-D-ribosyl)glycinamide is bound by residues D298, K367, and R374–R375.

Belongs to the PurK/PurT family. Homodimer.

It catalyses the reaction N(1)-(5-phospho-beta-D-ribosyl)glycinamide + formate + ATP = N(2)-formyl-N(1)-(5-phospho-beta-D-ribosyl)glycinamide + ADP + phosphate + H(+). It participates in purine metabolism; IMP biosynthesis via de novo pathway; N(2)-formyl-N(1)-(5-phospho-D-ribosyl)glycinamide from N(1)-(5-phospho-D-ribosyl)glycinamide (formate route): step 1/1. Functionally, involved in the de novo purine biosynthesis. Catalyzes the transfer of formate to 5-phospho-ribosyl-glycinamide (GAR), producing 5-phospho-ribosyl-N-formylglycinamide (FGAR). Formate is provided by PurU via hydrolysis of 10-formyl-tetrahydrofolate. The sequence is that of Formate-dependent phosphoribosylglycinamide formyltransferase from Janthinobacterium sp. (strain Marseille) (Minibacterium massiliensis).